The following is a 199-amino-acid chain: Thymidine kinase (199 aa).

ATP-binding positions include 15–22 and 88–91; these read GSMFSGKS and DEIQ. The active-site Proton acceptor is E89. Zn(2+) is bound by residues C145, C148, C183, and H186.

Belongs to the thymidine kinase family. Homotetramer.

The protein resides in the cytoplasm. The catalysed reaction is thymidine + ATP = dTMP + ADP + H(+). The polypeptide is Thymidine kinase (Staphylococcus haemolyticus (strain JCSC1435)).